Here is a 91-residue protein sequence, read N- to C-terminus: LYR motif-containing protein 4 (91 aa).

2 residues coordinate pantetheine 4'-phosphate: Arg6 and Lys44. Position 47 is an N6-succinyllysine (Lys47).

This sequence belongs to the complex I LYR family. In terms of assembly, homodimer. Component of the mitochondrial core iron-sulfur cluster (ISC) complex composed of NFS1, LYRM4, NDUFAB1, ISCU, FXN, and FDX2; this complex is a heterohexamer containing two copies of each monomer. Component of the cyteine desulfurase complex composed of NFS1, LYRM4 and NDUFAB1; this complex contributes to the stability and cysteine desulfurase activity of NFS1. Interacts with FXN; this interaction is nickel-dependent. Interacts with the cytoplasmic form of NFS1; the complex increases the stability of NFS1. Forms a complex with the cytoplasmic form of NFS1; this complex increases the stability and cysteine desulfurase activity of NFS1. Interacts with NFS1.

The protein resides in the mitochondrion. The protein localises to the nucleus. The protein operates within cofactor biosynthesis; iron-sulfur cluster biosynthesis. In terms of biological role, stabilizing factor, of the core iron-sulfur cluster (ISC) assembly complex, that regulates, in association with NDUFAB1, the stability and the cysteine desulfurase activity of NFS1 and participates in the [2Fe-2S] clusters assembly on the scaffolding protein ISCU. The core iron-sulfur cluster (ISC) assembly complex is involved in the de novo synthesis of a [2Fe-2S] cluster, the first step of the mitochondrial iron-sulfur protein biogenesis. This process is initiated by the cysteine desulfurase complex (NFS1:LYRM4:NDUFAB1) that produces persulfide which is delivered on the scaffold protein ISCU in a FXN-dependent manner. Then this complex is stabilized by FDX2 which provides reducing equivalents to accomplish the [2Fe-2S] cluster assembly. Finally, the [2Fe-2S] cluster is transferred from ISCU to chaperone proteins, including HSCB, HSPA9 and GLRX5. May also participates in the iron-sulfur protein biogenesis in the cytoplasm through its interaction with the cytoplasmic form of NFS1. This is LYR motif-containing protein 4 from Bos taurus (Bovine).